Consider the following 110-residue polypeptide: Insulin (110 aa).

The first 24 residues, 1–24, serve as a signal peptide directing secretion; the sequence is MALWMRLLPLLALLALWAPAPTRA. 3 disulfides stabilise this stretch: Cys31/Cys96, Cys43/Cys109, and Cys95/Cys100. Positions 57-87 are cleaved as a propeptide — c peptide; the sequence is EVEDLQVRDVELAGAPGEGGLQPLALEGALQ.

The protein belongs to the insulin family. In terms of assembly, heterodimer of a B chain and an A chain linked by two disulfide bonds.

It localises to the secreted. In terms of biological role, insulin decreases blood glucose concentration. It increases cell permeability to monosaccharides, amino acids and fatty acids. It accelerates glycolysis, the pentose phosphate cycle, and glycogen synthesis in liver. The chain is Insulin (INS) from Canis lupus familiaris (Dog).